The chain runs to 149 residues: Alpha-crystallin A chain (149 aa).

One can recognise a sHSP domain in the interval 41–149; the sequence is LFRSVLESGI…DPTHSERPIP (109 aa). H89, E91, H96, and H143 together coordinate Zn(2+).

This sequence belongs to the small heat shock protein (HSP20) family. Heteropolymer composed of three CRYAA and one CRYAB subunits. Inter-subunit bridging via zinc ions enhances stability, which is crucial as there is no protein turn over in the lens. Can also form homodimers and homotetramers (dimers of dimers) which serve as the building blocks of homooligomers. Within homooligomers, the zinc-binding motif is created from residues of 3 different molecules. His-89 and Glu-91 from one molecule are ligands of the zinc ion, and His-96 and His-143 residues from additional molecules complete the site with tetrahedral coordination geometry.

It is found in the cytoplasm. The protein localises to the nucleus. Functionally, contributes to the transparency and refractive index of the lens. May act as a chaperone, preventing aggregation of various proteins under a wide range of stress conditions. The chain is Alpha-crystallin A chain (CRYAA) from Anas platyrhynchos (Mallard).